A 489-amino-acid chain; its full sequence is Retinoblastoma-binding protein 5 homolog (489 aa).

WD repeat units follow at residues Asp22–Ser63, Ala64–Lys103, Asp147–Ser187, Ser195–Lys234, Val248–His290, and Thr292–Ala330. Residues Asp451–Lys489 form a disordered region.

As to quaternary structure, core component of several methyltransferase-containing complexes. Component of the SET1 complex, composed at least of the catalytic subunit Set1, wds/WDR5, Wdr82, Rbbp5, ash2, Cfp1/CXXC1, hcf and Dpy-30L1. Component of the MLL3/4 complex composed at least of the catalytic subunit trr, ash2, Rbbp5, Dpy-30L1, wds, hcf, ptip, Pa1, Utx, Lpt and Ncoa6.

It localises to the nucleus. In terms of biological role, component of the SET1 complex that specifically di- and trimethylates 'Lys-4' of histone H3 and of the MLL3/4 complex which also methylates histone H3 'Lys-4'. In Drosophila melanogaster (Fruit fly), this protein is Retinoblastoma-binding protein 5 homolog.